An 89-amino-acid polypeptide reads, in one-letter code: Small ribosomal subunit protein uS15 (89 aa).

It belongs to the universal ribosomal protein uS15 family. In terms of assembly, part of the 30S ribosomal subunit. Forms a bridge to the 50S subunit in the 70S ribosome, contacting the 23S rRNA.

One of the primary rRNA binding proteins, it binds directly to 16S rRNA where it helps nucleate assembly of the platform of the 30S subunit by binding and bridging several RNA helices of the 16S rRNA. Its function is as follows. Forms an intersubunit bridge (bridge B4) with the 23S rRNA of the 50S subunit in the ribosome. This chain is Small ribosomal subunit protein uS15, found in Latilactobacillus sakei subsp. sakei (strain 23K) (Lactobacillus sakei subsp. sakei).